A 420-amino-acid chain; its full sequence is Trophoblast glycoprotein (420 aa).

Positions 1–31 (MPGGCSRGPAAGDGRLRLARLALVLLGWVSS) are cleaved as a signal peptide. Over 32–355 (SSPTSSASSF…PILPPSLQTS (324 aa)) the chain is Extracellular. Residues 53-91 (SAQPPLPDQCPALCECSEAARTVKCVNRNLTEVPTDLPA) enclose the LRRNT domain. Cystine bridges form between Cys62–Cys68 and Cys66–Cys77. N-linked (GlcNAc...) asparagine glycosylation occurs at Asn81. LRR repeat units lie at residues 92–113 (YVRNLFLTGNQLAVLPAGAFAR), 116–139 (PLAELAALNLSGSRLDEVRAGAFE), 141–163 (LPSLRQLDLSHNPLADLSPFAFS), 172–204 (PSPLVELILNHIVPPEDERQNRSFEGMVVAALL), 209–232 (LQGLRRLELASNHFLYLPRDVLAQ), 233–255 (LPSLRHLDLSNNSLVSLTYVSFR), and 256–275 (NLTHLESLHLEDNALKVLHN). Residue Asn124 is glycosylated (N-linked (GlcNAc...) asparagine). N-linked (GlcNAc...) asparagine glycosylation occurs at Asn275. The LRRCT domain maps to 283 to 346 (GLPHIRVFLD…LNSADLDCDP (64 aa)). 2 disulfides stabilise this stretch: Cys298-Cys323 and Cys300-Cys344. The chain crosses the membrane as a helical span at residues 356-376 (YVFLGIVLALIGAIFLLVLYL). Topologically, residues 377–420 (NRKGIKKWMHNIRDACRDHMEGYHYRYEINADPRLTNLSSNSDV) are cytoplasmic. Residue Ser418 is modified to Phosphoserine.

Highly glycosylated. In terms of tissue distribution, expressed by all types of trophoblasts as early as 9 weeks of development. Specific for trophoblastic cells except for amniotic epithelium. In adult tissues, the expression is limited to a few epithelial cell types but is found on a variety of carcinoma.

Its subcellular location is the cell membrane. May function as an inhibitor of Wnt/beta-catenin signaling by indirectly interacting with LRP6 and blocking Wnt3a-dependent LRP6 internalization. The chain is Trophoblast glycoprotein (TPBG) from Homo sapiens (Human).